The sequence spans 416 residues: Multifunctional CCA protein (416 aa).

ATP is bound by residues G8 and R11. Residues G8 and R11 each contribute to the CTP site. Residues D21 and D23 each coordinate Mg(2+). Residues R91, R138, and R141 each contribute to the ATP site. Residues R91, R138, and R141 each contribute to the CTP site. In terms of domain architecture, HD spans T229–F331.

This sequence belongs to the tRNA nucleotidyltransferase/poly(A) polymerase family. Bacterial CCA-adding enzyme type 1 subfamily. In terms of assembly, monomer. Can also form homodimers and oligomers. Mg(2+) serves as cofactor. It depends on Ni(2+) as a cofactor.

It carries out the reaction a tRNA precursor + 2 CTP + ATP = a tRNA with a 3' CCA end + 3 diphosphate. It catalyses the reaction a tRNA with a 3' CCA end + 2 CTP + ATP = a tRNA with a 3' CCACCA end + 3 diphosphate. Functionally, catalyzes the addition and repair of the essential 3'-terminal CCA sequence in tRNAs without using a nucleic acid template. Adds these three nucleotides in the order of C, C, and A to the tRNA nucleotide-73, using CTP and ATP as substrates and producing inorganic pyrophosphate. tRNA 3'-terminal CCA addition is required both for tRNA processing and repair. Also involved in tRNA surveillance by mediating tandem CCA addition to generate a CCACCA at the 3' terminus of unstable tRNAs. While stable tRNAs receive only 3'-terminal CCA, unstable tRNAs are marked with CCACCA and rapidly degraded. In Xylella fastidiosa (strain M12), this protein is Multifunctional CCA protein.